A 170-amino-acid chain; its full sequence is Cytochrome c-type biogenesis protein CcmE (170 aa).

Residues 1–7 lie on the Cytoplasmic side of the membrane; it reads MTRKQRR. A helical; Signal-anchor for type II membrane protein membrane pass occupies residues 8–28; that stretch reads LTIIGGALFVLAVAAGLVLNA. Topologically, residues 29 to 170 are periplasmic; it reads LRDSIVFFST…GEKTAAGATQ (142 aa). Heme-binding residues include His122 and Tyr126. A compositionally biased stretch (basic and acidic residues) spans 137 to 146; that stretch reads KQGHWKDDYG. The interval 137-170 is disordered; it reads KQGHWKDDYGKPQAAKPGPVSMREGEKTAAGATQ.

Belongs to the CcmE/CycJ family.

It localises to the cell inner membrane. Its function is as follows. Heme chaperone required for the biogenesis of c-type cytochromes. Transiently binds heme delivered by CcmC and transfers the heme to apo-cytochromes in a process facilitated by CcmF and CcmH. The protein is Cytochrome c-type biogenesis protein CcmE of Bradyrhizobium sp. (strain BTAi1 / ATCC BAA-1182).